A 994-amino-acid chain; its full sequence is Receptor-like protein 6 (994 aa).

Positions 1–25 are cleaved as a signal peptide; that stretch reads MTGLYSSMSFFLRTIVLLFSTSSFC. Topologically, residues 26–946 are extracellular; sequence NTFASLTQDS…SSSSSSEEDE (921 aa). N-linked (GlcNAc...) asparagine glycans are attached at residues asparagine 116, asparagine 134, and asparagine 154. 19 LRR repeats span residues 122 to 146, 148 to 171, 174 to 199, 205 to 228, 230 to 253, 254 to 278, 280 to 301, 302 to 325, 326 to 349, 350 to 373, 375 to 397, 398 to 421, 423 to 445, 446 to 471, 477 to 497, 498 to 520, 521 to 544, 546 to 569, and 571 to 595; these read LQHL…EFSK, MRLE…LLQL, LVSL…LFLH, FMNL…EFSY, WSLR…VLLI, PNLE…LRNN, LLKL…ISNL, KHLT…LRSL, SHLS…VSNL, KQLT…LLNL, QLRY…ISQL, SNLE…LFNI, SLTT…NISL, LHNL…VFLS, SLAL…SEFS, SHLE…IRNQ, RNLS…LWRL, ELST…ALSG, and KIVM…GIQY. N-linked (GlcNAc...) asparagine glycosylation is found at asparagine 277 and asparagine 287. Asparagine 420, asparagine 435, and asparagine 442 each carry an N-linked (GlcNAc...) asparagine glycan. The N-linked (GlcNAc...) asparagine glycan is linked to asparagine 489. 3 N-linked (GlcNAc...) asparagine glycosylation sites follow: asparagine 522, asparagine 554, and asparagine 561. The LRR 20; degenerate repeat unit spans residues 597-613; the sequence is LGSYNNFTGYIPPSICG. Asparagine 602 carries N-linked (GlcNAc...) asparagine glycosylation. LRR repeat units lie at residues 614 to 637, 639 to 663, 665 to 687, 689 to 710, 711 to 737, 739 to 762, 803 to 827, 828 to 851, 852 to 875, and 877 to 900; these read LANP…CLEA, MSSL…FMNA, VLSS…LAGC, ALEI…WLNS, LPKL…VWFG, PLLR…YFMN, LTKY…VGIL, KELH…LANL, TNLE…LGTL, and SLEW…QFHR. A glycan (N-linked (GlcNAc...) asparagine) is linked at asparagine 649. Residue asparagine 701 is glycosylated (N-linked (GlcNAc...) asparagine). A glycan (N-linked (GlcNAc...) asparagine) is linked at asparagine 762. N-linked (GlcNAc...) asparagine glycans are attached at residues asparagine 834 and asparagine 850. Residues asparagine 882 and asparagine 902 are each glycosylated (N-linked (GlcNAc...) asparagine). Residues 947-967 traverse the membrane as a helical segment; sequence LISWIAACLGFAPGMVFGLTM. Residues 968-994 lie on the Cytoplasmic side of the membrane; that stretch reads GYIMTSHKHEWFMDTFGRRKGRSTRTR.

It belongs to the RLP family.

The protein localises to the cell membrane. This is Receptor-like protein 6 from Arabidopsis thaliana (Mouse-ear cress).